The sequence spans 351 residues: 3-dehydroquinate synthase (351 aa).

NAD(+) is bound by residues aspartate 60–lysine 65, glycine 94–aspartate 98, threonine 118–threonine 119, lysine 131, lysine 140, and phenylalanine 158–threonine 161. 3 residues coordinate Zn(2+): glutamate 173, histidine 239, and histidine 256.

It belongs to the sugar phosphate cyclases superfamily. Dehydroquinate synthase family. Co(2+) serves as cofactor. The cofactor is Zn(2+). Requires NAD(+) as cofactor.

It is found in the cytoplasm. The enzyme catalyses 7-phospho-2-dehydro-3-deoxy-D-arabino-heptonate = 3-dehydroquinate + phosphate. Its pathway is metabolic intermediate biosynthesis; chorismate biosynthesis; chorismate from D-erythrose 4-phosphate and phosphoenolpyruvate: step 2/7. Its function is as follows. Catalyzes the conversion of 3-deoxy-D-arabino-heptulosonate 7-phosphate (DAHP) to dehydroquinate (DHQ). The sequence is that of 3-dehydroquinate synthase from Campylobacter jejuni subsp. jejuni serotype O:23/36 (strain 81-176).